Consider the following 296-residue polypeptide: MQDRFIRSITQLPTPLADALIPMLHQNFAGHLDAQQLATLTSASKMTEAEVLLALLPIAAALAKPPISEFYVGAIAKGKSGDIYMGANLELPGEALFHSVHAEQSAISHAWLSGESQIVDIIVNASPCGHCRQFMNELVEGSKISIHLPAQESHPLAYYLPYAFGPKDLNVTSPLMAKQQTEFALDSADPMIIEGLDHAGLSYAPYTQSFAAVVLETRDGATYCGRYAENAAFNPSMLPMQMALSNLVRHNREFSDISRAVLIESSQGKISLVGATMDALHTVAAIELEHIVIDPV.

CMP/dCMP-type deaminase domains lie at 47–167 (TEAE…FGPK) and 186–296 (DSAD…IDPV). A substrate-binding site is contributed by 88-90 (NLE). Residue H101 participates in Zn(2+) binding. The active-site Proton donor is E103. Zn(2+)-binding residues include C128 and C131.

Belongs to the cytidine and deoxycytidylate deaminase family. Homodimer. It depends on Zn(2+) as a cofactor.

The catalysed reaction is cytidine + H2O + H(+) = uridine + NH4(+). It catalyses the reaction 2'-deoxycytidine + H2O + H(+) = 2'-deoxyuridine + NH4(+). Functionally, this enzyme scavenges exogenous and endogenous cytidine and 2'-deoxycytidine for UMP synthesis. This chain is Cytidine deaminase, found in Shewanella baltica (strain OS155 / ATCC BAA-1091).